The following is a 580-amino-acid chain: Putative adenine deaminase YerA (580 aa).

Residue serine 399 is modified to Phosphoserine.

It belongs to the metallo-dependent hydrolases superfamily. Adenine deaminase family.

It carries out the reaction adenine + H2O + H(+) = hypoxanthine + NH4(+). The polypeptide is Putative adenine deaminase YerA (yerA) (Bacillus subtilis (strain 168)).